Here is a 287-residue protein sequence, read N- to C-terminus: Ribosomal RNA small subunit methyltransferase A (287 aa).

S-adenosyl-L-methionine-binding residues include asparagine 28, leucine 30, glycine 55, glutamate 77, aspartate 103, and asparagine 123.

The protein belongs to the class I-like SAM-binding methyltransferase superfamily. rRNA adenine N(6)-methyltransferase family. RsmA subfamily.

Its subcellular location is the cytoplasm. It catalyses the reaction adenosine(1518)/adenosine(1519) in 16S rRNA + 4 S-adenosyl-L-methionine = N(6)-dimethyladenosine(1518)/N(6)-dimethyladenosine(1519) in 16S rRNA + 4 S-adenosyl-L-homocysteine + 4 H(+). Its function is as follows. Specifically dimethylates two adjacent adenosines (A1518 and A1519) in the loop of a conserved hairpin near the 3'-end of 16S rRNA in the 30S particle. May play a critical role in biogenesis of 30S subunits. The sequence is that of Ribosomal RNA small subunit methyltransferase A from Rhodopseudomonas palustris (strain BisB5).